Reading from the N-terminus, the 171-residue chain is Small ribosomal subunit protein uS5 (171 aa).

The S5 DRBM domain occupies 15-78 (LEEKVVKINR…EKAKKQLVRI (64 aa)).

The protein belongs to the universal ribosomal protein uS5 family. As to quaternary structure, part of the 30S ribosomal subunit. Contacts proteins S4 and S8.

In terms of biological role, with S4 and S12 plays an important role in translational accuracy. Located at the back of the 30S subunit body where it stabilizes the conformation of the head with respect to the body. This chain is Small ribosomal subunit protein uS5, found in Onion yellows phytoplasma (strain OY-M).